The primary structure comprises 102 residues: Beta-defensin 116 (102 aa).

The signal sequence occupies residues 1 to 23 (MSVMKPCLMTIAILMILAQKTPG). 3 disulfides stabilise this stretch: Cys40-Cys67, Cys47-Cys61, and Cys51-Cys68. The interval 83 to 102 (EDYDSNSNLSVTNSSSYSHI) is disordered. Over residues 87–102 (SNSNLSVTNSSSYSHI) the composition is skewed to low complexity.

This sequence belongs to the beta-defensin family.

Its subcellular location is the secreted. Its function is as follows. Has antibacterial activity. The polypeptide is Beta-defensin 116 (DEFB116) (Homo sapiens (Human)).